The following is a 717-amino-acid chain: SUN domain-containing protein 2 (717 aa).

The tract at residues 1–66 is disordered; that stretch reads MSRRSQRLTR…PQLGPSSDAH (66 aa). Positions 1–139 are LMNA-binding; sequence MSRRSQRLTR…SSSGYSSEDD (139 aa). Residues 1–212 are Nuclear-facing; sequence MSRRSQRLTR…LTRRFSSLKT (212 aa). Ser12 bears the Phosphoserine mark. Residues 19–32 show a composition bias toward low complexity; the sequence is SSSSGGSSVAGSQS. Ser38 and Ser54 each carry phosphoserine. Thr107 is modified (phosphothreonine). Ser110, Ser113, Ser116, and Ser136 each carry phosphoserine. The helical transmembrane segment at 213 to 233 threads the bilayer; the sequence is FLWFLLPLLLLTCLTYGAWYF. At 234–717 the chain is on the perinuclear space side; it reads YPYGLQTFHP…RFRVHGEPAH (484 aa). Coiled coils occupy residues 273–296, 348–440, and 475–506; these read EQRV…EFSS, RRET…EEVG, and LLQR…SARE. Residues 507-717 form a sufficient for interaction with SYNE1 and SYNE2 region; the sequence is AAASLSLTLQ…RFRVHGEPAH (211 aa). The region spanning 555–716 is the SUN domain; sequence GASVISTRCS…YRFRVHGEPA (162 aa). A disulfide bond links Cys601 and Cys705. A glycan (N-linked (GlcNAc...) asparagine) is linked at Asn636.

As to quaternary structure, core component of the LINC complex which is composed of inner nuclear membrane SUN domain-containing proteins coupled to outer nuclear membrane KASH domain-containing nesprins. SUN and KASH domain-containing proteins seem to bind each other promiscuously; however, differentially expression of LINC complex constituents is giving rise to specific assemblies. At least SUN1/2-containing core LINC complexes are proposed to be hexameric composed of three protomers of each KASH and SUN domain-containing protein. Interacts with SYNE2; the SUN2:SYNE2/KASH2 LINC complex is a heterohexamer; the homotrimeric cloverleave-like conformation of the SUN domain is a prerequisite for LINC complex formation in which three separate SYNE2/KASH2 peptides bind at the interface of adjacent SUN domains. Component of a probable SUN2:KASH5 LINC complex. Interacts with SYNE1 and SYNE3; probably forming respective LINC complexes. Interacts with A-type lamin. Interaction with lamins B1 and C is hardly detectable. Interacts with EMD and RAB5A. Interacts with TMEM43. Interacts with TMEM201. In terms of processing, the disulfide bond with SYNE2 is required for stability of the SUN2:SYNE2/KASH2 LINC complex under tensile forces though not required for the interaction. The disulfide bond is proposed to be conserved in LINC complexes involved in force transmission. Widely expressed. Highly expressed in heart, lung and muscle. Weakly expressed in fetal heart. Slightly overexpressed in some heart tissues form patients with congenital heart defects.

The protein localises to the nucleus inner membrane. It localises to the nucleus envelope. The protein resides in the endosome membrane. As a component of the LINC (LInker of Nucleoskeleton and Cytoskeleton) complex, involved in the connection between the nuclear lamina and the cytoskeleton. The nucleocytoplasmic interactions established by the LINC complex play an important role in the transmission of mechanical forces across the nuclear envelope and in nuclear movement and positioning. Specifically, SYNE2 and SUN2 assemble in arrays of transmembrane actin-associated nuclear (TAN) lines which are bound to F-actin cables and couple the nucleus to retrograde actin flow during actin-dependent nuclear movement. Required for interkinetic nuclear migration (INM) and essential for nucleokinesis and centrosome-nucleus coupling during radial neuronal migration in the cerebral cortex and during glial migration. Required for nuclear migration in retinal photoreceptor progenitors implicating association with cytoplasmic dynein-dynactin and kinesin motor complexes, and probably B-type lamins; SUN1 and SUN2 seem to act redundantly. The SUN1/2:KASH5 LINC complex couples telomeres to microtubules during meiosis; SUN1 and SUN2 seem to act at least partial redundantly. Anchors chromosome movement in the prophase of meiosis and is involved in selective gene expression of coding and non-coding RNAs needed for gametogenesis. Required for telomere attachment to nuclear envelope and gametogenesis. May also function on endocytic vesicles as a receptor for RAB5-GDP and participate in the activation of RAB5. The sequence is that of SUN domain-containing protein 2 from Homo sapiens (Human).